Here is a 1343-residue protein sequence, read N- to C-terminus: DNA-directed RNA polymerase subunit beta (1343 aa).

This sequence belongs to the RNA polymerase beta chain family. As to quaternary structure, the RNAP catalytic core consists of 2 alpha, 1 beta, 1 beta' and 1 omega subunit. When a sigma factor is associated with the core the holoenzyme is formed, which can initiate transcription.

It catalyses the reaction RNA(n) + a ribonucleoside 5'-triphosphate = RNA(n+1) + diphosphate. Its function is as follows. DNA-dependent RNA polymerase catalyzes the transcription of DNA into RNA using the four ribonucleoside triphosphates as substrates. This is DNA-directed RNA polymerase subunit beta from Shewanella woodyi (strain ATCC 51908 / MS32).